The sequence spans 1890 residues: Proteasome-associated protein ECM29 homolog (1890 aa).

18 HEAT repeats span residues Asn-6–Glu-29, Ala-30–Ser-67, Asp-130–Asn-167, Phe-226–Phe-263, Arg-294–Asn-330, Lys-334–Ser-354, Lys-355–Gln-395, Gly-459–Ala-496, Ala-498–Thr-523, Ser-524–Arg-561, Pro-565–Val-602, Ala-685–Ser-722, Pro-776–Ile-813, Ser-843–Glu-882, Asp-938–Gln-975, Leu-980–Ser-1018, Pro-1118–Glu-1155, and Arg-1159–Gly-1196. Ser-1213 carries the phosphoserine modification. 8 HEAT repeats span residues Ala-1271–Ser-1309, Pro-1313–Ala-1350, Ser-1378–Gly-1415, Lys-1416–Glu-1457, Asp-1497–Pro-1534, Leu-1541–Ser-1578, Pro-1583–Arg-1620, and Gln-1623–Ala-1660. The interval Arg-1680 to Lys-1702 is disordered. Ser-1683 carries the post-translational modification Phosphoserine. Thr-1691 carries the post-translational modification Phosphothreonine. Ser-1692 carries the post-translational modification Phosphoserine. 2 HEAT repeats span residues Pro-1751–Ile-1788 and Lys-1826–Lys-1863.

As to quaternary structure, associated with the proteasome.

The protein localises to the cytoplasm. This chain is Proteasome-associated protein ECM29 homolog, found in Drosophila melanogaster (Fruit fly).